We begin with the raw amino-acid sequence, 415 residues long: Arrestin red cell isoform 3 (415 aa).

This sequence belongs to the arrestin family.

The protein localises to the cytoplasm. The protein is Arrestin red cell isoform 3 of Oncorhynchus mykiss (Rainbow trout).